The sequence spans 434 residues: Glutamate-1-semialdehyde 2,1-aminomutase (434 aa).

Position 273 is an N6-(pyridoxal phosphate)lysine (K273).

Belongs to the class-III pyridoxal-phosphate-dependent aminotransferase family. HemL subfamily. In terms of assembly, homodimer. Requires pyridoxal 5'-phosphate as cofactor.

The protein localises to the cytoplasm. The catalysed reaction is (S)-4-amino-5-oxopentanoate = 5-aminolevulinate. Its pathway is porphyrin-containing compound metabolism; protoporphyrin-IX biosynthesis; 5-aminolevulinate from L-glutamyl-tRNA(Glu): step 2/2. The sequence is that of Glutamate-1-semialdehyde 2,1-aminomutase from Polynucleobacter asymbioticus (strain DSM 18221 / CIP 109841 / QLW-P1DMWA-1) (Polynucleobacter necessarius subsp. asymbioticus).